The primary structure comprises 247 residues: Uridylate kinase (247 aa).

15–18 (KLSG) contributes to the ATP binding site. The involved in allosteric activation by GTP stretch occupies residues 23–28 (GDEGFG). G57 contributes to the UMP binding site. 2 residues coordinate ATP: G58 and R62. UMP-binding positions include D77 and 138–145 (TGNPFFTT). Residues T165, Y171, and D174 each coordinate ATP.

This sequence belongs to the UMP kinase family. As to quaternary structure, homohexamer.

Its subcellular location is the cytoplasm. It carries out the reaction UMP + ATP = UDP + ADP. Its pathway is pyrimidine metabolism; CTP biosynthesis via de novo pathway; UDP from UMP (UMPK route): step 1/1. With respect to regulation, allosterically activated by GTP. Inhibited by UTP. Its function is as follows. Catalyzes the reversible phosphorylation of UMP to UDP. This is Uridylate kinase from Saccharophagus degradans (strain 2-40 / ATCC 43961 / DSM 17024).